The primary structure comprises 313 residues: Porphobilinogen deaminase (313 aa).

S-(dipyrrolylmethanemethyl)cysteine is present on Cys242.

This sequence belongs to the HMBS family. As to quaternary structure, monomer. Requires dipyrromethane as cofactor.

It carries out the reaction 4 porphobilinogen + H2O = hydroxymethylbilane + 4 NH4(+). Its pathway is porphyrin-containing compound metabolism; protoporphyrin-IX biosynthesis; coproporphyrinogen-III from 5-aminolevulinate: step 2/4. Tetrapolymerization of the monopyrrole PBG into the hydroxymethylbilane pre-uroporphyrinogen in several discrete steps. In Pectobacterium atrosepticum (strain SCRI 1043 / ATCC BAA-672) (Erwinia carotovora subsp. atroseptica), this protein is Porphobilinogen deaminase.